Here is a 754-residue protein sequence, read N- to C-terminus: Disintegrin and metalloproteinase domain-containing protein 32 (754 aa).

Positions 1–22 (MLGAMLHTLLLLLLAELGALLA) are cleaved as a signal peptide. Position 23 is a phosphoserine (Ser-23). A propeptide spanning residues 23–176 (SGPESQSSFL…TNYGILINKK (154 aa)) is cleaved from the precursor. Residue Asn-126 is glycosylated (N-linked (GlcNAc...) asparagine). Residues 177–689 (PKSPFKNLFP…ERASKNQEKK (513 aa)) lie on the Extracellular side of the membrane. Residues 187 to 384 (LYLEMSIVVD…EGAKCLQNKP (198 aa)) form the Peptidase M12B domain. 4 cysteine pairs are disulfide-bonded: Cys-296-Cys-379, Cys-338-Cys-363, Cys-340-Cys-345, and Cys-454-Cys-475. 4 N-linked (GlcNAc...) asparagine glycosylation sites follow: Asn-362, Asn-469, Asn-570, and Asn-571. Positions 391 to 483 (AAVCGNGKVE…NCPPDVTINN (93 aa)) constitute a Disintegrin domain. The 33-residue stretch at 628–660 (QSKTCSSKCHGNGVCNSHGVCHCNAGYSPPNCQ) folds into the EGF-like domain. 3 disulfides stabilise this stretch: Cys-632/Cys-642, Cys-636/Cys-648, and Cys-650/Cys-659. A helical membrane pass occupies residues 690–710 (WLLSLYIVLIILASVFLIGTG). Topologically, residues 711–754 (WKGLKQCGSKEEESMSSESKSEDSTYTYVSRSTSETSSMTSTSS) are cytoplasmic. Basic and acidic residues predominate over residues 720–733 (KEEESMSSESKSED). The tract at residues 720–754 (KEEESMSSESKSEDSTYTYVSRSTSETSSMTSTSS) is disordered. The segment covering 734–754 (STYTYVSRSTSETSSMTSTSS) has biased composition (low complexity).

Expressed in sperm (at protein level). Highly expressed in the testis and weakly expressed in the epididymis, brain and heart.

It localises to the membrane. Its function is as follows. May play a role in sperm development and fertilization This is a non-catalytic metalloprotease-like protein. This chain is Disintegrin and metalloproteinase domain-containing protein 32, found in Mus musculus (Mouse).